A 197-amino-acid chain; its full sequence is Rac-like GTP-binding protein RHO1 (197 aa).

Residue 13–20 (GDGAVGKT) coordinates GTP. The Effector region signature appears at 35-43 (YVPTVFDNF). GTP contacts are provided by residues 60-64 (DTAGQ) and 118-121 (TKLD). C194 is subject to Cysteine methyl ester. C194 carries S-geranylgeranyl cysteine lipidation. A propeptide spans 195 to 197 (SIL) (removed in mature form).

It belongs to the small GTPase superfamily. Rho family.

The protein resides in the cytoplasm. It is found in the membrane. In terms of biological role, inactive GDP-bound Rho GTPases reside in the cytosol, are found in a complex with Rho GDP-dissociation inhibitors (Rho GDIs), and are released from the GDI protein in order to translocate to membranes upon activation. This chain is Rac-like GTP-binding protein RHO1 (RHO1), found in Beta vulgaris (Sugar beet).